The sequence spans 283 residues: Isochorismatase domain-containing protein 1 (283 aa).

It belongs to the isochorismatase family.

The chain is Isochorismatase domain-containing protein 1 (isoc1) from Salmo salar (Atlantic salmon).